A 339-amino-acid polypeptide reads, in one-letter code: Holliday junction branch migration complex subunit RuvB (339 aa).

Positions 2–187 are large ATPase domain (RuvB-L); it reads KDVNEEERII…FGIIEHMQYY (186 aa). ATP contacts are provided by residues Leu26, Arg27, Gly68, Lys71, Thr72, Thr73, 134 to 136, Arg177, Tyr187, and Arg224; that span reads EDF. Residue Thr72 participates in Mg(2+) binding. The small ATPAse domain (RuvB-S) stretch occupies residues 188-258; it reads SVEDLEKIIQ…TTKHSLHLLE (71 aa). The interval 261–339 is head domain (RuvB-H); that stretch reads DEGLDQTDRK…QLGYPPKDEK (79 aa). DNA is bound by residues Arg316 and Arg321.

Belongs to the RuvB family. Homohexamer. Forms an RuvA(8)-RuvB(12)-Holliday junction (HJ) complex. HJ DNA is sandwiched between 2 RuvA tetramers; dsDNA enters through RuvA and exits via RuvB. An RuvB hexamer assembles on each DNA strand where it exits the tetramer. Each RuvB hexamer is contacted by two RuvA subunits (via domain III) on 2 adjacent RuvB subunits; this complex drives branch migration. In the full resolvosome a probable DNA-RuvA(4)-RuvB(12)-RuvC(2) complex forms which resolves the HJ.

It is found in the cytoplasm. The enzyme catalyses ATP + H2O = ADP + phosphate + H(+). The RuvA-RuvB-RuvC complex processes Holliday junction (HJ) DNA during genetic recombination and DNA repair, while the RuvA-RuvB complex plays an important role in the rescue of blocked DNA replication forks via replication fork reversal (RFR). RuvA specifically binds to HJ cruciform DNA, conferring on it an open structure. The RuvB hexamer acts as an ATP-dependent pump, pulling dsDNA into and through the RuvAB complex. RuvB forms 2 homohexamers on either side of HJ DNA bound by 1 or 2 RuvA tetramers; 4 subunits per hexamer contact DNA at a time. Coordinated motions by a converter formed by DNA-disengaged RuvB subunits stimulates ATP hydrolysis and nucleotide exchange. Immobilization of the converter enables RuvB to convert the ATP-contained energy into a lever motion, pulling 2 nucleotides of DNA out of the RuvA tetramer per ATP hydrolyzed, thus driving DNA branch migration. The RuvB motors rotate together with the DNA substrate, which together with the progressing nucleotide cycle form the mechanistic basis for DNA recombination by continuous HJ branch migration. Branch migration allows RuvC to scan DNA until it finds its consensus sequence, where it cleaves and resolves cruciform DNA. This chain is Holliday junction branch migration complex subunit RuvB, found in Lactobacillus johnsonii (strain CNCM I-12250 / La1 / NCC 533).